The chain runs to 122 residues: Holo-[acyl-carrier-protein] synthase (122 aa).

Residues aspartate 5 and glutamate 54 each contribute to the Mg(2+) site.

This sequence belongs to the P-Pant transferase superfamily. AcpS family. It depends on Mg(2+) as a cofactor.

It is found in the cytoplasm. The catalysed reaction is apo-[ACP] + CoA = holo-[ACP] + adenosine 3',5'-bisphosphate + H(+). Functionally, transfers the 4'-phosphopantetheine moiety from coenzyme A to a Ser of acyl-carrier-protein. The chain is Holo-[acyl-carrier-protein] synthase from Aquifex aeolicus (strain VF5).